Reading from the N-terminus, the 171-residue chain is Peptide deformylase (171 aa).

Fe cation contacts are provided by Cys-91 and His-133. Residue Glu-134 is part of the active site. Residue His-137 participates in Fe cation binding.

This sequence belongs to the polypeptide deformylase family. Fe(2+) is required as a cofactor.

The catalysed reaction is N-terminal N-formyl-L-methionyl-[peptide] + H2O = N-terminal L-methionyl-[peptide] + formate. Functionally, removes the formyl group from the N-terminal Met of newly synthesized proteins. Requires at least a dipeptide for an efficient rate of reaction. N-terminal L-methionine is a prerequisite for activity but the enzyme has broad specificity at other positions. This Sodalis glossinidius (strain morsitans) protein is Peptide deformylase.